The sequence spans 124 residues: MATINQLVRKPRVKKVVKSNVPALEACPQKRGVCTRVYTTTPKKPNSALRKVCRIRLTNGYEVTSYIGGEGHNLQEHSVVLIRGGRVKDLPGVRYHTVRGALDCAGVKDRKQGRSKYGVKRPKS.

Aspartate 89 carries the post-translational modification 3-methylthioaspartic acid.

Belongs to the universal ribosomal protein uS12 family. In terms of assembly, part of the 30S ribosomal subunit. Contacts proteins S8 and S17. May interact with IF1 in the 30S initiation complex.

In terms of biological role, with S4 and S5 plays an important role in translational accuracy. Interacts with and stabilizes bases of the 16S rRNA that are involved in tRNA selection in the A site and with the mRNA backbone. Located at the interface of the 30S and 50S subunits, it traverses the body of the 30S subunit contacting proteins on the other side and probably holding the rRNA structure together. The combined cluster of proteins S8, S12 and S17 appears to hold together the shoulder and platform of the 30S subunit. The polypeptide is Small ribosomal subunit protein uS12 (Pasteurella multocida (strain Pm70)).